We begin with the raw amino-acid sequence, 412 residues long: Phosphoglycerate kinase (412 aa).

Substrate is bound by residues 24–26 (DLN), arginine 40, 63–66 (HLGR), arginine 122, and arginine 162. ATP is bound by residues lysine 212, glycine 300, glutamate 331, and 360–363 (GGDS).

Belongs to the phosphoglycerate kinase family. As to quaternary structure, monomer.

The protein resides in the cytoplasm. It carries out the reaction (2R)-3-phosphoglycerate + ATP = (2R)-3-phospho-glyceroyl phosphate + ADP. It functions in the pathway carbohydrate degradation; glycolysis; pyruvate from D-glyceraldehyde 3-phosphate: step 2/5. This Mycobacterium bovis (strain ATCC BAA-935 / AF2122/97) protein is Phosphoglycerate kinase (pgk).